Consider the following 519-residue polypeptide: Spermidine/putrescine import ATP-binding protein PotA (519 aa).

The ABC transporter domain occupies 6-401 (LHLRDITKIY…PNSLWVANFI (396 aa)). 39–46 (GPSGCGKT) lines the ATP pocket. The tract at residues 107 to 270 (RKPKDNVDQS…EQFENKNITR (164 aa)) is insert.

The protein belongs to the ABC transporter superfamily. Spermidine/putrescine importer (TC 3.A.1.11.1) family. The complex is composed of two ATP-binding proteins (PotA), two transmembrane proteins (PotB and PotC) and a solute-binding protein (PotD).

It localises to the cell membrane. It catalyses the reaction ATP + H2O + polyamine-[polyamine-binding protein]Side 1 = ADP + phosphate + polyamineSide 2 + [polyamine-binding protein]Side 1.. Functionally, part of the ABC transporter complex PotABCD involved in spermidine/putrescine import. Responsible for energy coupling to the transport system. The sequence is that of Spermidine/putrescine import ATP-binding protein PotA from Ureaplasma parvum serovar 3 (strain ATCC 700970).